A 272-amino-acid polypeptide reads, in one-letter code: PILR alpha-associated neural protein (272 aa).

Positions 1 to 27 (MWPAQLLSQLLPLWPLLLLPLSLPAQG) are cleaved as a signal peptide. A disordered region spans residues 25–93 (AQGSSHRSPP…PSGFEEGPPS (69 aa)). At 28-174 (SSHRSPPAPA…FGGRGEGVDP (147 aa)) the chain is on the extracellular side. Residue Thr136 is glycosylated (O-linked (GalNAc...) threonine). A helical membrane pass occupies residues 175–195 (QLYVTITISIIIVLVATGIIF). The Cytoplasmic segment spans residues 196–272 (KFCWDRSQKR…KGAPAFQLNR (77 aa)). The segment at 205–272 (RRRPSGQQGA…KGAPAFQLNR (68 aa)) is disordered. Positions 209–225 (SGQQGALRQEESQQPLT) are enriched in polar residues.

In terms of processing, O-glycosylation at Thr-136 is essential for recognition by PILRA.

It localises to the membrane. Acts as a ligand for PILRA in neuronal tissues, where it may be involved in immune regulation. This chain is PILR alpha-associated neural protein (Pianp), found in Rattus norvegicus (Rat).